Consider the following 190-residue polypeptide: Elongation factor P-like protein (190 aa).

Belongs to the elongation factor P family.

The sequence is that of Elongation factor P-like protein from Psychromonas ingrahamii (strain DSM 17664 / CCUG 51855 / 37).